The sequence spans 348 residues: DnaJ homolog subfamily B member 5 (348 aa).

Residues 4–68 form the J domain; sequence DYYKILGIPS…KKRSLYDQYG (65 aa).

In Mus musculus (Mouse), this protein is DnaJ homolog subfamily B member 5 (Dnajb5).